Here is a 261-residue protein sequence, read N- to C-terminus: Segregation and condensation protein A (261 aa).

This sequence belongs to the ScpA family. As to quaternary structure, component of a cohesin-like complex composed of ScpA, ScpB and the Smc homodimer, in which ScpA and ScpB bind to the head domain of Smc. The presence of the three proteins is required for the association of the complex with DNA.

The protein resides in the cytoplasm. Functionally, participates in chromosomal partition during cell division. May act via the formation of a condensin-like complex containing Smc and ScpB that pull DNA away from mid-cell into both cell halves. The chain is Segregation and condensation protein A from Leptospira interrogans serogroup Icterohaemorrhagiae serovar copenhageni (strain Fiocruz L1-130).